A 464-amino-acid chain; its full sequence is Cysteine--tRNA ligase (464 aa).

C27 lines the Zn(2+) pocket. A 'HIGH' region motif is present at residues P29–N39. Zn(2+) is bound by residues C207, H232, and E236. The 'KMSKS' region signature appears at K264 to S268. K267 contacts ATP.

Belongs to the class-I aminoacyl-tRNA synthetase family. Monomer. Zn(2+) is required as a cofactor.

The protein resides in the cytoplasm. The enzyme catalyses tRNA(Cys) + L-cysteine + ATP = L-cysteinyl-tRNA(Cys) + AMP + diphosphate. The chain is Cysteine--tRNA ligase from Alkaliphilus oremlandii (strain OhILAs) (Clostridium oremlandii (strain OhILAs)).